The chain runs to 308 residues: Ribonuclease Z (308 aa).

Positions 62, 64, 66, 67, 140, 211, and 269 each coordinate Zn(2+). Residue aspartate 66 is the Proton acceptor of the active site.

It belongs to the RNase Z family. In terms of assembly, homodimer. It depends on Zn(2+) as a cofactor.

It catalyses the reaction Endonucleolytic cleavage of RNA, removing extra 3' nucleotides from tRNA precursor, generating 3' termini of tRNAs. A 3'-hydroxy group is left at the tRNA terminus and a 5'-phosphoryl group is left at the trailer molecule.. Zinc phosphodiesterase, which displays some tRNA 3'-processing endonuclease activity. Probably involved in tRNA maturation, by removing a 3'-trailer from precursor tRNA. The protein is Ribonuclease Z of Treponema denticola (strain ATCC 35405 / DSM 14222 / CIP 103919 / JCM 8153 / KCTC 15104).